The chain runs to 241 residues: DnaA regulatory inactivator Hda (241 aa).

Belongs to the DnaA family. HdA subfamily. As to quaternary structure, the active form seems to be an ADP-bound monomer. Forms the RIDA complex (regulatory inactivation of DnaA) of ATP-DnaA, ADP-Hda and the DNA-loaded beta sliding clamp (dnaN).

In terms of biological role, mediates the interaction of DNA replication initiator protein DnaA with DNA polymerase subunit beta sliding clamp (dnaN). Stimulates hydrolysis of ATP-DnaA to ADP-DnaA, rendering DnaA inactive for reinitiation, a process called regulatory inhibition of DnaA or RIDA. The chain is DnaA regulatory inactivator Hda from Citrobacter koseri (strain ATCC BAA-895 / CDC 4225-83 / SGSC4696).